Here is a 200-residue protein sequence, read N- to C-terminus: Cysteine dioxygenase type 1 (200 aa).

Residues His-86, His-88, and His-140 each coordinate Fe cation. The 3'-(S-cysteinyl)-tyrosine (Cys-Tyr) cross-link spans Cys-93–Tyr-157.

It belongs to the cysteine dioxygenase family. As to quaternary structure, monomer. Fe(2+) is required as a cofactor. Requires Ni(2+) as cofactor. Zn(2+) serves as cofactor. The thioether cross-link between Cys-93 and Tyr-157 plays a structural role through stabilizing the Fe(2+) ion, and prevents the production of highly damaging free hydroxyl radicals by holding the oxygen radical via hydroxyl hydrogen. As to expression, highly expressed in liver and placenta. Low expression in heart, brain and pancreas. Also detected in hepatoblastoma Hep-G2 cells.

The enzyme catalyses L-cysteine + O2 = 3-sulfino-L-alanine + H(+). Its pathway is organosulfur biosynthesis; taurine biosynthesis; hypotaurine from L-cysteine: step 1/2. Functionally, catalyzes the oxidation of cysteine to cysteine sulfinic acid with addition of molecular dioxygen. This is Cysteine dioxygenase type 1 (CDO1) from Homo sapiens (Human).